Here is a 353-residue protein sequence, read N- to C-terminus: MAQIHHCVTLLLILCCSGLCGAIQWLGLTVNGSRVAWNESGHCRLLDGLVPEQSQLCKRNLELMQSVVNAAKQAKLTCQMTFSDMRWNCSSVENAPNFTPDLSKGTRESAFVYALASATLSHTIARACASGELPTCSCGATPAEVPGTGFRWGGCGDNLHYGLNMGSAFVDAPMKSSKSGGTQATKMINLHNNAVGRQVLMDSLETKCKCHGVSGSCSVKTCWKGLQDLPHIANELKSKYLGATKVIHRQTGTRRQLVPRELDIRPVRESELVYLVSSPDYCAKNPKLGSYGTQDRVCNKTSVGSDSCNLMCCGRGYNAYTETIVERCQCKYYYCCYVVCKKCERTVERYVCK.

The first 22 residues, 1 to 22, serve as a signal peptide directing secretion; it reads MAQIHHCVTLLLILCCSGLCGA. N-linked (GlcNAc...) asparagine glycosylation is found at N31, N38, and N88. Cystine bridges form between C78-C89, C128-C136, C138-C155, C208-C222, and C210-C217. S214 carries the O-palmitoleoyl serine; by PORCN lipid modification. A sulfotyrosine mark is found at Y274 and Y281. 6 disulfide bridges follow: C282–C313, C298–C308, C312–C352, C328–C343, C330–C340, and C335–C336. N-linked (GlcNAc...) asparagine glycosylation is present at N299.

The protein belongs to the Wnt family. Homodimer. Secreted homodimers form a complex with wnt5a homodimers; tyrosine sulfation of both wnt11 and wnt5a by tpst1 is required for this interaction. Interacts with the transmembrane receptor fzd7/fz7. Interacts with lrp6 and ryk. Interacts with tdgf1/frl1. Interacts weakly with frzb1 and strongly with frzb2/crescent. Interaction with frzb2/crescent antagonizes wnt11 function in the neuroectoderm, but enhances it in mesodermal tissue. Glycosylation is required for protein secretion. Post-translationally, palmitoleoylation is required for efficient binding to frizzled receptors. Depalmitoleoylation leads to Wnt signaling pathway inhibition.

It localises to the secreted. It is found in the extracellular space. The protein resides in the extracellular matrix. Its function is as follows. Ligand for the frizzled7 transmembrane receptor. Primarily acts via non-canonical Wnt pathways mediated by either Ca(2+) and PKC, or by JNK and dvl2/dsh. Depending on the cellular context, can also signal via the canonical Wnt pathway mediated by beta-catenin and dvl2/dsh. May also inhibit canonical Wnt signaling. Maternally initiates dorsal/ventral axis formation by a canonical route, which signals via lrp6. In a complex with wnt5a, activates the canonical and non-canonical processes involved in axis formation. In the non-canonical pathway, acts through fzd7/fz7 to induce phosphorylation of dvl2/dsh. Signals through a non-canonical Wnt pathway to regulate convergent extension movements during gastrulation. Interactions with the secreted Wnt antagonist sfrp5 to coordinate foregut development, acting via a non-canonical wnt pathway whereby sfrp5 restricts wnt11b activity to prevent inappropriate foregut formation. Mediates cardiogenesis via non-canonical Wnt signaling involving JNK-activation and PKC. Acts redundantly with wnt11/wnt11r during pronephros induction. The sequence is that of Protein Wnt-11b-1 from Xenopus tropicalis (Western clawed frog).